A 635-amino-acid polypeptide reads, in one-letter code: Threonine--tRNA ligase (635 aa).

The TGS domain maps to 1–61; that stretch reads MVSIRLPDGS…DRDASLAIVT (61 aa). Positions 242–533 are catalytic; the sequence is DHRKLGKQLD…LIEHHAGAMP (292 aa). The Zn(2+) site is built by C333, H384, and H510.

Belongs to the class-II aminoacyl-tRNA synthetase family. In terms of assembly, homodimer. Requires Zn(2+) as cofactor.

It is found in the cytoplasm. It carries out the reaction tRNA(Thr) + L-threonine + ATP = L-threonyl-tRNA(Thr) + AMP + diphosphate + H(+). In terms of biological role, catalyzes the attachment of threonine to tRNA(Thr) in a two-step reaction: L-threonine is first activated by ATP to form Thr-AMP and then transferred to the acceptor end of tRNA(Thr). Also edits incorrectly charged L-seryl-tRNA(Thr). The sequence is that of Threonine--tRNA ligase from Burkholderia lata (strain ATCC 17760 / DSM 23089 / LMG 22485 / NCIMB 9086 / R18194 / 383).